The following is a 180-amino-acid chain: ATP-dependent protease subunit HslV (180 aa).

Thr5 is a catalytic residue. Residues Gly161, Cys164, and Thr167 each coordinate Na(+).

Belongs to the peptidase T1B family. HslV subfamily. A double ring-shaped homohexamer of HslV is capped on each side by a ring-shaped HslU homohexamer. The assembly of the HslU/HslV complex is dependent on binding of ATP.

Its subcellular location is the cytoplasm. The catalysed reaction is ATP-dependent cleavage of peptide bonds with broad specificity.. With respect to regulation, allosterically activated by HslU binding. Protease subunit of a proteasome-like degradation complex believed to be a general protein degrading machinery. This chain is ATP-dependent protease subunit HslV, found in Campylobacter lari (strain RM2100 / D67 / ATCC BAA-1060).